The chain runs to 166 residues: NAD(P)H-quinone oxidoreductase subunit I, chloroplastic (166 aa).

4Fe-4S ferredoxin-type domains lie at 55–84 (GRIH…VDWK) and 95–124 (LNYS…MTEE). Residues cysteine 64, cysteine 67, cysteine 70, cysteine 74, cysteine 104, cysteine 107, cysteine 110, and cysteine 114 each contribute to the [4Fe-4S] cluster site.

The protein belongs to the complex I 23 kDa subunit family. As to quaternary structure, NDH is composed of at least 16 different subunits, 5 of which are encoded in the nucleus. It depends on [4Fe-4S] cluster as a cofactor.

The protein localises to the plastid. The protein resides in the chloroplast thylakoid membrane. The catalysed reaction is a plastoquinone + NADH + (n+1) H(+)(in) = a plastoquinol + NAD(+) + n H(+)(out). The enzyme catalyses a plastoquinone + NADPH + (n+1) H(+)(in) = a plastoquinol + NADP(+) + n H(+)(out). Functionally, NDH shuttles electrons from NAD(P)H:plastoquinone, via FMN and iron-sulfur (Fe-S) centers, to quinones in the photosynthetic chain and possibly in a chloroplast respiratory chain. The immediate electron acceptor for the enzyme in this species is believed to be plastoquinone. Couples the redox reaction to proton translocation, and thus conserves the redox energy in a proton gradient. This is NAD(P)H-quinone oxidoreductase subunit I, chloroplastic from Pericome caudata (Mountain tail-leaf).